The sequence spans 158 residues: 14-3-3 protein gamma (158 aa).

The interaction with SPATA18/MIEAP stretch occupies residues 1-158 (AAAMKNVTEL…TSDQQDDDGG (158 aa)). Ser-48 is subject to Phosphoserine. A Phosphotyrosine modification is found at Tyr-60. A Phosphothreonine modification is found at Thr-72. Residue Ser-130 is modified to Phosphoserine. Thr-149 is subject to Phosphothreonine. Ser-150 is subject to Phosphoserine.

This sequence belongs to the 14-3-3 family. In terms of assembly, homodimer. Part of a complex that contains DSG3, PKP1, YAP1 and YWHAG; the complex is required for localization of DSG3 and YAP1 to the cell membrane in keratinocytes. Interacts with SAMSN1. Interacts with RAF1, SSH1 and CRTC2/TORC2. Interacts with ABL1 (phosphorylated form); the interaction retains it in the cytoplasm. Interacts with GAB2. Interacts with MDM4 (phosphorylated); negatively regulates MDM4 activity toward TP53. Interacts with PKA-phosphorylated AANAT and SIRT2. Interacts with the 'Thr-369' phosphorylated form of DAPK2. Interacts with PI4KB, TBC1D22A and TBC1D22B. Interacts with SLITRK1. Interacts with LRRK2; this interaction is dependent on LRRK2 phosphorylation. Interacts with MARK2 and MARK3. Interacts with MEFV. Interacts with ENDOG, TSC2 and PIK3C3; interaction with ENDOG weakens its interaction with TSC2 and PIK3C3. Interacts with (phosphorylated) WDR24. Interacts with BEST1; this interaction promotes L-glutamate channel activity leading to the positive regulation of NMDA glutamate receptor activity through the L-glutamate secretion. Interacts with PKP1 (when phosphorylated); the interaction results in translocation of PKP1 to the cytoplasm and loss of intercellular adhesion in keratinocytes. Interacts with SPATA18/MIEAP; a protein that also plays a role in MALM. In terms of processing, phosphorylated by various PKC isozymes.

Its subcellular location is the cytoplasm. The protein localises to the cytosol. It localises to the mitochondrion matrix. Adapter protein implicated in the regulation of a large spectrum of both general and specialized signaling pathways. Binds to a large number of partners, usually by recognition of a phosphoserine or phosphothreonine motif. Binding generally results in the modulation of the activity of the binding partner. Promotes inactivation of WDR24 component of the GATOR2 complex by binding to phosphorylated WDR24. Participates in the positive regulation of NMDA glutamate receptor activity by promoting the L-glutamate secretion through interaction with BEST1. Reduces keratinocyte intercellular adhesion, via interacting with PKP1 and sequestering it in the cytoplasm, thereby reducing its incorporation into desmosomes. Plays a role in mitochondrial protein catabolic process (also named MALM) that promotes the degradation of damaged proteins inside mitochondria. In Ovis aries (Sheep), this protein is 14-3-3 protein gamma.